The chain runs to 400 residues: S-adenosylmethionine sensor upstream of mTORC1 (400 aa).

Residues arginine 99, glycine 168, aspartate 186, aspartate 198, phenylalanine 199, and serine 240 each contribute to the S-adenosyl-L-methionine site.

Belongs to the BMT2/SAMTOR family. As to quaternary structure, interacts with the GATOR1 complex; interaction is disrupted when samtor binds S-adenosyl-L-methionine. Interacts with the KICSTOR complex; interaction is disrupted when samtor binds S-adenosyl-L-methionine.

Functionally, S-adenosyl-L-methionine-binding protein that acts as an inhibitor of mTORC1 signaling via interaction with the GATOR1 and KICSTOR complexes. Acts as a sensor of S-adenosyl-L-methionine to signal methionine sufficiency to mTORC1: in presence of methionine, binds S-adenosyl-L-methionine, leading to disrupt interaction with the GATOR1 and KICSTOR complexes and promote mTORC1 signaling. Upon methionine starvation, S-adenosyl-L-methionine levels are reduced, thereby promoting the association with GATOR1 and KICSTOR, leading to inhibit mTORC1 signaling. Probably also acts as a S-adenosyl-L-methionine-dependent methyltransferase. This is S-adenosylmethionine sensor upstream of mTORC1 from Xenopus tropicalis (Western clawed frog).